The primary structure comprises 428 residues: Probable protein phosphatase 2C 5 (428 aa).

The 273-residue stretch at 25-297 folds into the PPM-type phosphatase domain; it reads RSEKVEKPFV…DDTTCVVVDI (273 aa). Asp-73, Gly-74, Asp-249, and Asp-288 together coordinate Mn(2+).

It belongs to the PP2C family. The cofactor is Mg(2+). Mn(2+) is required as a cofactor.

It carries out the reaction O-phospho-L-seryl-[protein] + H2O = L-seryl-[protein] + phosphate. The enzyme catalyses O-phospho-L-threonyl-[protein] + H2O = L-threonyl-[protein] + phosphate. This Arabidopsis thaliana (Mouse-ear cress) protein is Probable protein phosphatase 2C 5.